We begin with the raw amino-acid sequence, 146 residues long: Cyanate hydratase (146 aa).

Active-site residues include Arg-87, Glu-90, and Ser-113.

Belongs to the cyanase family.

It carries out the reaction cyanate + hydrogencarbonate + 3 H(+) = NH4(+) + 2 CO2. In terms of biological role, catalyzes the reaction of cyanate with bicarbonate to produce ammonia and carbon dioxide. This chain is Cyanate hydratase, found in Nostoc sp. (strain PCC 7120 / SAG 25.82 / UTEX 2576).